The primary structure comprises 35 residues: Mu-thomitoxin-Hme1c (35 aa).

Disulfide bonds link Cys-2-Cys-18, Cys-9-Cys-23, and Cys-17-Cys-34.

The protein belongs to the neurotoxin 07 (Beta/delta-agtx) family. Expressed by the venom gland.

The protein resides in the secreted. In terms of biological role, gating-modifier toxin that inhibits mammalian and insect voltage-gated sodium channels. It shifts the voltage dependence of channel activation to more positive voltages. It shows potent activity on Nav1.4/SCN4A (IC(50)=103 nM), Nav1.5/SCN5A (IC(50)=268 nM) and Para/DmNav1 (IC(50)=555 nM) and lower activities on Nav1.2/SCN2A (IC(50)=1447 nM) and Nav1.6/SCN8A (IC(50)=3504 nM). In addition, at a concentration of 1 uM, the toxin inhibits 90-100% of sodium current through Nav1.2/SCN2A, Nav1.4/SCN4A, Nav1.5/SCN5A, Nav1.6/SCN8A and Para/DmNav1 channels, when the voltage of maximal activation of the channel in control conditions is applied. It binds to the S3-S4 helix-loop-helix motif in the voltage-sensing domain of repeat 1 (shown on hNav1.4/SCN4A). The toxin is amphiphilic and binds to both neutral and negatively charged lipid vesicles with high affinity. The hydrophobic face lies on the opposite side to the hydrophobic faces of classical gating modifiers. The protein is Mu-thomitoxin-Hme1c of Heriaeus mellotteei (Crab spider).